A 106-amino-acid polypeptide reads, in one-letter code: Guanylate cyclase activator 2B (106 aa).

The N-terminal stretch at 1-21 (MSRSQLWAAVVLLLLLQSAQG) is a signal peptide. Positions 22–91 (VYIKYHGFQV…STFKALRTIA (70 aa)) are excised as a propeptide. 3 disulfide bridges follow: Cys-62/Cys-75, Cys-95/Cys-103, and Cys-98/Cys-106.

The protein belongs to the guanylin family. Localized predominantly in intestinal villi and the corticomedullary junction of the kidney.

The protein localises to the secreted. Endogenous activator of intestinal guanylate cyclase. It stimulates this enzyme through the same receptor binding region as the heat-stable enterotoxins. May be a potent physiological regulator of intestinal fluid and electrolyte transport. May be an autocrine/paracrine regulator of intestinal salt and water transport. The protein is Guanylate cyclase activator 2B (Guca2b) of Mus musculus (Mouse).